We begin with the raw amino-acid sequence, 588 residues long: Transmembrane protein 201 homolog (588 aa).

Residues 1 to 212 (MEVAAAVGVI…FFFAGGSTCE (212 aa)) lie on the Nuclear side of the membrane. A helical transmembrane segment spans residues 213 to 233 (ALHFGCLISSIILFLANIDFL). Residues 234–254 (QQDAGASLINLPKALQDILPE) lie on the Perinuclear space side of the membrane. Residues 255 to 275 (VYKYSFVINFLIFTTHLIAAF) traverse the membrane as a helical segment. Topologically, residues 276 to 280 (NNKCR) are nuclear. The chain crosses the membrane as a helical span at residues 281–301 (VTLPDLLLPILLILAMLTVLT). Topologically, residues 302–309 (SSDNLSQD) are perinuclear space. A helical membrane pass occupies residues 310–330 (VALVRGACASFSTILSMAVTL). The Nuclear segment spans residues 331–564 (LPRKKLHKKR…SGAWQCRVIG (234 aa)). Residues 378–457 (RRSPHTPSAS…QSTRSSHFKP (80 aa)) are disordered. Low complexity predominate over residues 384–396 (PSASPPAMNSSPP). 2 stretches are compositionally biased toward polar residues: residues 418–430 (NMQSYQTKPNNHV) and 441–452 (MAAQSVAQSTRS). A helical membrane pass occupies residues 565-585 (ILFALVFIVLIMQIGLFYVLF). Residues 586–588 (TRN) are Perinuclear space-facing.

Belongs to the TMEM201 family.

The protein localises to the nucleus inner membrane. Functionally, plays a role in nuclear migration in hypodermal cells. In Caenorhabditis elegans, this protein is Transmembrane protein 201 homolog.